An 811-amino-acid polypeptide reads, in one-letter code: Myb-like DNA-binding protein BAS1 (811 aa).

The Myb-like domain occupies 34–110 (HRKNGRNSWS…DVRKRWTGSL (77 aa)). 2 HTH myb-type domains span residues 111–165 (DPNL…GPGS) and 166–218 (KGRL…TMVV). 2 consecutive DNA-binding regions (H-T-H motif) follow at residues 138 to 161 (WLSISMDIPGRTEDQCAKRYIEVL) and 191 to 214 (WRKISSEMEFRPSLTCRNRWRKII). Positions 237–264 (DMTDGKLRQHPIADSDIRSDSTPNKEEQ) are enriched in basic and acidic residues. Disordered regions lie at residues 237–320 (DMTD…SAPP), 348–379 (SQMNKQSPGGISDSPQTSLPPAFNPASLDEHM), 535–713 (ATSH…LRDE), and 782–811 (LHNEAKKTSEHDMTSGGSTDNGSVLPLNPS). A compositionally biased stretch (low complexity) spans 265–275 (LQLSQQNNPSL). Positions 282–298 (NVKENESSKLPRLKDND) are enriched in basic and acidic residues. 3 stretches are compositionally biased toward polar residues: residues 348–366 (SQMNKQSPGGISDSPQTSL), 535–613 (ATSH…TSGS), and 653–664 (LNPSPNSVRSNG). Residues 782-794 (LHNEAKKTSEHDM) are compositionally biased toward basic and acidic residues.

As to quaternary structure, monomer.

The protein resides in the nucleus. In terms of biological role, activates HIS4 transcription only in combination with PHO2/BAS2. BAS1 is also involved in the regulation of the purine biosynthesis pathway. The sequence is that of Myb-like DNA-binding protein BAS1 (BAS1) from Saccharomyces cerevisiae (strain ATCC 204508 / S288c) (Baker's yeast).